The sequence spans 69 residues: Chondroitin proteoglycan 9 (69 aa).

The signal sequence occupies residues 1–19 (MHLWQLVLLVILFFGAAFG). O-linked (Xyl...) (chondroitin sulfate) serine glycans are attached at residues Ser-25 and Ser-27.

This Caenorhabditis elegans protein is Chondroitin proteoglycan 9.